Here is a 1036-residue protein sequence, read N- to C-terminus: ADAMTS-like protein 4 (1036 aa).

Residues 1 to 24 (MESWLGRLWLCMMLLLPLPQPCQD) form the signal peptide. The 45-residue stretch at 47–91 (GPWGRWASCSQPCGVGVQRRSRTCELHPALPLPPRPPRHPEAHRP) folds into the TSP type-1 1 domain. 2 disordered regions span residues 73 to 149 (HPAL…IKPG) and 163 to 308 (HRSR…WLPL). The segment covering 163-173 (HRSRRHPHRPG) has biased composition (basic residues). Residues 215–253 (TPRSGTAQTEVLPRTSSAPSYTGTPAPTSSFGDSRSFQG) show a composition bias toward polar residues. 2 N-linked (GlcNAc...) asparagine glycosylation sites follow: asparagine 454 and asparagine 737. TSP type-1 domains are found at residues 687–748 (CPPY…HLCG), 750–804 (WEIS…DMGP), 805–871 (CTTA…GPCE), 872–931 (RTWR…QGQA), and 932–988 (CEDK…QPCN). Positions 991 to 1028 (PDDQCKDSSPHCPLVVQARLCVYPYYTTTCCRSCAHVL) constitute a PLAC domain.

As to quaternary structure, interacts with CTSB. Interacts with FBN1. In terms of processing, glycosylated. Can be O-fucosylated by POFUT2 on a serine or a threonine residue found within the consensus sequence C1-X(2)-(S/T)-C2-G of the TSP type-1 repeat domains where C1 and C2 are the first and second cysteine residue of the repeat, respectively. Fucosylated repeats can then be further glycosylated by the addition of a beta-1,3-glucose residue by the glucosyltransferase, B3GALTL. Fucosylation mediates the efficient secretion of ADAMTS family members. Can also be C-glycosylated with one or two mannose molecules on tryptophan residues within the consensus sequence W-X-X-W of the TPRs, and N-glycosylated. These other glycosylations can also facilitate secretion. As to expression, widely expressed in a range of tissues. Especially prevalent in brain, spinal cord, muscle, lung and heart.

It localises to the secreted. It is found in the extracellular space. The protein resides in the extracellular matrix. In terms of biological role, positive regulation of apoptosis. May facilitate FBN1 microfibril biogenesis. The chain is ADAMTS-like protein 4 from Mus musculus (Mouse).